Here is a 213-residue protein sequence, read N- to C-terminus: Large ribosomal subunit protein bL25 (213 aa).

Residues 191 to 207 (AEPTDAPTAPAAAPGAE) are compositionally biased toward low complexity. The tract at residues 191–213 (AEPTDAPTAPAAAPGAEAPKDKA) is disordered.

This sequence belongs to the bacterial ribosomal protein bL25 family. CTC subfamily. As to quaternary structure, part of the 50S ribosomal subunit; part of the 5S rRNA/L5/L18/L25 subcomplex. Contacts the 5S rRNA. Binds to the 5S rRNA independently of L5 and L18.

Its function is as follows. This is one of the proteins that binds to the 5S RNA in the ribosome where it forms part of the central protuberance. This is Large ribosomal subunit protein bL25 from Polynucleobacter asymbioticus (strain DSM 18221 / CIP 109841 / QLW-P1DMWA-1) (Polynucleobacter necessarius subsp. asymbioticus).